The sequence spans 461 residues: tRNA(Ile)-lysidine synthase (461 aa).

26-31 (SGGPDS) lines the ATP pocket.

This sequence belongs to the tRNA(Ile)-lysidine synthase family.

It is found in the cytoplasm. The enzyme catalyses cytidine(34) in tRNA(Ile2) + L-lysine + ATP = lysidine(34) in tRNA(Ile2) + AMP + diphosphate + H(+). Ligates lysine onto the cytidine present at position 34 of the AUA codon-specific tRNA(Ile) that contains the anticodon CAU, in an ATP-dependent manner. Cytidine is converted to lysidine, thus changing the amino acid specificity of the tRNA from methionine to isoleucine. This is tRNA(Ile)-lysidine synthase from Clostridium acetobutylicum (strain ATCC 824 / DSM 792 / JCM 1419 / IAM 19013 / LMG 5710 / NBRC 13948 / NRRL B-527 / VKM B-1787 / 2291 / W).